The primary structure comprises 970 residues: Serine/threonine-protein kinase PLK4 (970 aa).

Residues 12–265 enclose the Protein kinase domain; that stretch reads FKVGNLLGKG…LSSVLDHPFM (254 aa). Residues 18–26 and Lys-41 contribute to the ATP site; that span reads LGKGSFAGV. 2 positions are modified to N6-acetyllysine: Lys-45 and Lys-46. Asp-136 acts as the Proton acceptor in catalysis. The tract at residues 324-373 is disordered; sequence VFPKNKSSSDFSSSGDGNSFYTQWGNQETSNSGRGRVIQDAEERPHSRYL. Over residues 327 to 343 the composition is skewed to low complexity; the sequence is KNKSSSDFSSSGDGNSF. Residues 344 to 356 are compositionally biased toward polar residues; that stretch reads YTQWGNQETSNSG. Residues 360 to 369 show a composition bias toward basic and acidic residues; the sequence is VIQDAEERPH. The residue at position 401 (Ser-401) is a Phosphoserine. The interval 498–540 is disordered; that stretch reads ISPTRDFQGHPDLQKDTSKNAWTDTKVKKNSDASDNAHSVKQP. Residues 504 to 515 are compositionally biased toward basic and acidic residues; that stretch reads FQGHPDLQKDTS. The span at 530–540 shows a compositional bias: polar residues; that stretch reads ASDNAHSVKQP. Positions 586–699 constitute a Cryptic POLO box 1 (CPB1) domain; that stretch reads TLRSITSPLV…SRFVQLVRSK (114 aa). Ser-665 is modified (phosphoserine). In terms of domain architecture, Cryptic POLO box 2 (CPB2) spans 700–813; the sequence is SPKITYFTRY…GRKPGSTSSP (114 aa). The tract at residues 808 to 829 is disordered; sequence GSTSSPKALSPPPSVDSNYPTR. Phosphoserine is present on Ser-817. In terms of domain architecture, POLO box spans 886–964; the sequence is QLLKSVFVKN…LSSILLMFSN (79 aa).

It belongs to the protein kinase superfamily. Ser/Thr protein kinase family. CDC5/Polo subfamily. In terms of assembly, homodimer. Interacts with CEP152 (via N-terminus). Interacts with CEP78; this interaction may be important for proper PLK4 localization to the centriole and PLK4-induced overduplication of centrioles. Interacts with CEP131. Interacts simultaneously with TENT5C and CEP192. Interacts with TENT5C; this interaction leads to the TENT5C recruitment in the centrosome. Interacts with CEP85; this interaction may be important in cell migration and centriole assembly. In terms of processing, ubiquitinated; leading to its degradation by the proteasome. Deubiquitinated by USP54; leading to PLK4 stabilization. Tyrosine-phosphorylated by TEC. Post-translationally, acetylation by KAT2A and KAT2B impairs kinase activity by shifting the kinase to an inactive conformation.

It localises to the cytoplasm. The protein resides in the cytoskeleton. The protein localises to the microtubule organizing center. It is found in the centrosome. Its subcellular location is the centriole. It localises to the nucleus. The protein resides in the nucleolus. The protein localises to the cleavage furrow. It catalyses the reaction L-seryl-[protein] + ATP = O-phospho-L-seryl-[protein] + ADP + H(+). It carries out the reaction L-threonyl-[protein] + ATP = O-phospho-L-threonyl-[protein] + ADP + H(+). In terms of biological role, serine/threonine-protein kinase that plays a central role in centriole duplication. Able to trigger procentriole formation on the surface of the parental centriole cylinder, leading to the recruitment of centriole biogenesis proteins such as SASS6, CPAP, CCP110, CEP135 and gamma-tubulin. When overexpressed, it is able to induce centrosome amplification through the simultaneous generation of multiple procentrioles adjoining each parental centriole during S phase. Phosphorylates 'Ser-151' of FBXW5 during the G1/S transition, leading to inhibit FBXW5 ability to ubiquitinate SASS6. Its central role in centriole replication suggests a possible role in tumorigenesis, centrosome aberrations being frequently observed in tumors. Also involved in deuterosome-mediated centriole amplification in multiciliated that can generate more than 100 centrioles. Also involved in trophoblast differentiation by phosphorylating HAND1, leading to disrupt the interaction between HAND1 and MDFIC and activate HAND1. Phosphorylates CDC25C and CHEK2. Required for the recruitment of STIL to the centriole and for STIL-mediated centriole amplification. Phosphorylates CEP131 and PCM1 which is essential for proper organization and integrity of centriolar satellites. The chain is Serine/threonine-protein kinase PLK4 from Pongo abelii (Sumatran orangutan).